The chain runs to 217 residues: Snake venom metalloproteinase lebetase-4 (217 aa).

Residues 1–14 constitute a propeptide that is removed on maturation; it reads SCRKKASQLNLTPE. At Gln15 the chain carries Pyrrolidone carboxylic acid. One can recognise a Peptidase M12B domain in the interval 21–217; the sequence is RYIELVIVAD…HNPQCILNQP (197 aa). The Ca(2+) site is built by Glu24 and Asp108. Cystine bridges form between Cys132/Cys212, Cys172/Cys196, and Cys174/Cys179. Residue His157 coordinates Zn(2+). Residue Glu158 is part of the active site. The Zn(2+) site is built by His161 and His167. The Ca(2+) site is built by Cys212 and Asn215.

Belongs to the venom metalloproteinase (M12B) family. P-I subfamily. Monomer. Requires Zn(2+) as cofactor. As to expression, expressed by the venom gland.

Its subcellular location is the secreted. With respect to regulation, fibrinolytic and caseinolytic activities are inhibited by Cd(2+), Cu(2+) and Co(2+) ions. Not inhibited by Mg(2+), Ca(2+) and Ba(2+). Also inhibited by EDTA, EGTA and 1,10-phenanthroline. In terms of biological role, snake venom zinc metalloprotease that hydrolyzes the Aalpha-chain and more slowly the Bbeta-chain of fibrin and fibrinogen. Also hydrolyzes casein and B-chain of oxidized insulin. Its fibrinolytic activity is direct, without any plasminogen activation. Inhibits ADP-induced and collagen-induced platelet aggregation. Shows low hemorrhagic activity. Cleaves the plasma proteinase inhibitors alpha(2)-macroglobulin (A2M) and alpha(2)M-related pregnancy zone protein (PZP), and is inhibited by them. The polypeptide is Snake venom metalloproteinase lebetase-4 (Macrovipera lebetinus (Levantine viper)).